The sequence spans 202 residues: FMN-dependent NADH:quinone oxidoreductase 2 (202 aa).

FMN contacts are provided by residues S9, 15-17 (SAS), 95-98 (MYNF), and 139-142 (TAGG).

This sequence belongs to the azoreductase type 1 family. Homodimer. Requires FMN as cofactor.

It carries out the reaction 2 a quinone + NADH + H(+) = 2 a 1,4-benzosemiquinone + NAD(+). The enzyme catalyses N,N-dimethyl-1,4-phenylenediamine + anthranilate + 2 NAD(+) = 2-(4-dimethylaminophenyl)diazenylbenzoate + 2 NADH + 2 H(+). In terms of biological role, quinone reductase that provides resistance to thiol-specific stress caused by electrophilic quinones. Reduces both benzoquinones and naphthoquinones efficiently. Also exhibits azoreductase activity. Catalyzes the reductive cleavage of the azo bond in aromatic azo compounds to the corresponding amines. Preferred substrates are the large bis-azo dye Ponceau BS, amaranth and tropaeolin O. This Pseudomonas aeruginosa (strain ATCC 15692 / DSM 22644 / CIP 104116 / JCM 14847 / LMG 12228 / 1C / PRS 101 / PAO1) protein is FMN-dependent NADH:quinone oxidoreductase 2.